Here is a 209-residue protein sequence, read N- to C-terminus: Ribosomal RNA large subunit methyltransferase E (209 aa).

Residues glycine 63, tryptophan 65, aspartate 83, aspartate 99, and aspartate 124 each coordinate S-adenosyl-L-methionine. Lysine 164 serves as the catalytic Proton acceptor.

This sequence belongs to the class I-like SAM-binding methyltransferase superfamily. RNA methyltransferase RlmE family.

Its subcellular location is the cytoplasm. It carries out the reaction uridine(2552) in 23S rRNA + S-adenosyl-L-methionine = 2'-O-methyluridine(2552) in 23S rRNA + S-adenosyl-L-homocysteine + H(+). Functionally, specifically methylates the uridine in position 2552 of 23S rRNA at the 2'-O position of the ribose in the fully assembled 50S ribosomal subunit. In Aliivibrio fischeri (strain MJ11) (Vibrio fischeri), this protein is Ribosomal RNA large subunit methyltransferase E.